The primary structure comprises 201 residues: Homeobox protein goosecoid-2 (201 aa).

Disordered stretches follow at residues M1–P55, P95–R124, and R179–C201. Over residues P95 to A106 the composition is skewed to low complexity. Residues T123–K182 constitute a DNA-binding region (homeobox).

It belongs to the paired homeobox family. Bicoid subfamily. As to expression, expressed in adult testis.

It is found in the nucleus. May have a role in development. May regulate its own transcription. May bind the bicoid consensus sequence TAATCC. This Mus musculus (Mouse) protein is Homeobox protein goosecoid-2 (Gsc2).